The primary structure comprises 153 residues: Ribonuclease H (153 aa).

The region spanning 1 to 142 is the RNase H type-1 domain; sequence MTPEVVIYTD…ADALARKGLS (142 aa). Positions 10, 48, 70, and 134 each coordinate Mg(2+).

The protein belongs to the RNase H family. In terms of assembly, monomer. Mg(2+) serves as cofactor.

The protein resides in the cytoplasm. It carries out the reaction Endonucleolytic cleavage to 5'-phosphomonoester.. Endonuclease that specifically degrades the RNA of RNA-DNA hybrids. This chain is Ribonuclease H, found in Phenylobacterium zucineum (strain HLK1).